The primary structure comprises 388 residues: Carbohydrate sulfotransferase 4 (388 aa).

Residues 1–7 (MMLLKKG) lie on the Cytoplasmic side of the membrane. The chain crosses the membrane as a helical; Signal-anchor for type II membrane protein span at residues 8–28 (RLLMFLGSQVIVVALFIHMSV). Over 29 to 388 (HRHLSQREES…HILGQVFREG (360 aa)) the chain is Lumenal. Residues 50–56 (WRSGSSF) and 204–212 (RDPRAVFRS) each bind 3'-phosphoadenylyl sulfate. N-linked (GlcNAc...) asparagine glycosylation is found at Asn307, Asn328, and Asn369.

It belongs to the sulfotransferase 1 family. Gal/GlcNAc/GalNAc subfamily. In terms of assembly, monomer. As to expression, specifically expressed in high endothelial venules (HEV) of peripheral lymph nodes.

The protein resides in the golgi apparatus membrane. The catalysed reaction is 3-O-{N-acetyl-beta-D-glucosaminyl-(1-&gt;3)-beta-D-galactosyl-(1-&gt;3)-N-acetyl-alpha-D-galactosaminyl}-L-threonyl-[protein] + 3'-phosphoadenylyl sulfate = 3-O-{6-O-sulfo-N-acetyl-beta-D-glucosaminyl-(1-&gt;3)-beta-D-galactosyl-(1-&gt;3)-N-acetyl-alpha-D-galactosaminyl}-L-threonyl-[protein] + adenosine 3',5'-bisphosphate + H(+). The enzyme catalyses 3-O-{N-acetyl-beta-D-glucosaminyl-(1-&gt;3)-beta-D-galactosyl-(1-&gt;3)-N-acetyl-alpha-D-galactosaminyl}-L-seryl-[protein] + 3'-phosphoadenylyl sulfate = 3-O-{6-O-sulfo-N-acetyl-beta-D-glucosaminyl-(1-&gt;3)-beta-D-galactosyl-(1-&gt;3)-N-acetyl-alpha-D-galactosaminyl}-L-seryl-[protein] + adenosine 3',5'-bisphosphate + H(+). It carries out the reaction a 3-O-{beta-D-galactosyl-(1-&gt;3)-[N-acetyl-beta-D-glucosaminyl-(1-&gt;6)]-N-acetyl-alpha-D-galactosaminyl}-L-threonyl-[protein] + 3'-phosphoadenylyl sulfate = 3-O-{beta-D-galactosyl-(1-&gt;3)-[6-O-sulfo-N-acetyl-beta-D-glucosaminyl-(1-&gt;6)]-N-acetyl-alpha-D-galactosaminyl}-L-threonyl-[protein] + adenosine 3',5'-bisphosphate + H(+). It catalyses the reaction 3-O-{beta-D-galactosyl-(1-&gt;3)-[N-acetyl-beta-D-glucosaminyl-(1-&gt;6)]-N-acetyl-alpha-D-galactosaminyl}-L-seryl-[protein] + 3'-phosphoadenylyl sulfate = 3-O-{beta-D-galactosyl-(1-&gt;3)-[6-O-sulfo-N-acetyl-beta-D-glucosaminyl-(1-&gt;6)]-N-acetyl-alpha-D-galactosaminyl}-L-seryl-[protein] + adenosine 3',5'-bisphosphate + H(+). It functions in the pathway protein modification; carbohydrate sulfation. In terms of biological role, sulfotransferase involved in SELL/L-selectin ligand biosynthesis pathway. Catalyzes the transfer of the sulfate group from 3'-phospho-5'-adenylyl sulfate (PAPS) onto the hydroxyl group at C-6 position of the non-reducing N-acetylglucosamine (GlcNAc) residue within O-linked mucin-type glycans. Contributes to generate sialyl 6-sulfo Lewis X determinant (also known as MECA-79 epitope) for SELL recognition, a prerequisite for continuous lymphocyte homing into peripheral lymph nodes and antigen immune surveillance. Transfers the sulfate group primarily on core 2 GlcNAcbeta1-6(Galbeta1-3)GalNAcalphaSer/Thr and extended core 1 GlcNAcbeta1-3Galbeta1-3GalNAcalphaSer/Thr based O-linked glycans on CD34 and GLYCAM1 peripheral node addressins (PNAds) expressed on the lumenal side of high endothelial venules (HEVs). The recognition of PNAds by SELL initiates a multistep process comprising tethering and rolling of blood lymphocytes on HEVs against the blood flow, followed by chemokine signaling, integrin-mediated lymphocyte adhesion onto endothelial cells and lymphocyte transendothelial migration. Modulates rolling velocity and differential T and B lymphocyte recruitment into peripheral lymph nodes, with a major role in B lymphocyte homing. Might be redundant in sulfation of MADCAM1 and lymphocyte trafficking to mesenteric lymph nodes. Can also sulfonate core 3 GlcNAcbeta1-3GalNAc-R based glycans as well as GlcNAcbeta1-3Galbeta1-Glc, GlcNAcbeta1-6ManOMe and GlcNAcbeta1-2Man oligosaccharides, which might be ectopically expressed during tumorigenesis. This is Carbohydrate sulfotransferase 4 (Chst4) from Mus musculus (Mouse).